The chain runs to 200 residues: Protein GrpE (200 aa).

It belongs to the GrpE family. Homodimer.

The protein localises to the cytoplasm. Its function is as follows. Participates actively in the response to hyperosmotic and heat shock by preventing the aggregation of stress-denatured proteins, in association with DnaK and GrpE. It is the nucleotide exchange factor for DnaK and may function as a thermosensor. Unfolded proteins bind initially to DnaJ; upon interaction with the DnaJ-bound protein, DnaK hydrolyzes its bound ATP, resulting in the formation of a stable complex. GrpE releases ADP from DnaK; ATP binding to DnaK triggers the release of the substrate protein, thus completing the reaction cycle. Several rounds of ATP-dependent interactions between DnaJ, DnaK and GrpE are required for fully efficient folding. In Mycoplasma mycoides subsp. mycoides SC (strain CCUG 32753 / NCTC 10114 / PG1), this protein is Protein GrpE.